The chain runs to 63 residues: Putative F-box protein At1g47702 (63 aa).

Residues 23-63 enclose the F-box domain; that stretch reads KDRISDLPNRILGKIIVKLPLDEAVRIMALSKRWKSIWDDN.

This Arabidopsis thaliana (Mouse-ear cress) protein is Putative F-box protein At1g47702.